The following is a 616-amino-acid chain: Formin-binding protein 1 (616 aa).

A required for self-association and induction of membrane tubulation region spans residues 1–79 (MSWGTELWDQ…CKAFLSTLNE (79 aa)). Positions 1 to 264 (MSWGTELWDQ…AAESIDQKND (264 aa)) constitute an F-BAR domain. The segment at 1 to 334 (MSWGTELWDQ…KKNKLMSLLT (334 aa)) is interaction with microtubules. N6-acetyllysine is present on residues Lys66 and Lys110. A coiled-coil region spans residues 67-259 (YTACKAFLST…DGIVKAAESI (193 aa)). The required for self-association and induction of membrane tubulation stretch occupies residues 251–616 (GIVKAAESID…VYLDKNAKGS (366 aa)). Disordered stretches follow at residues 280-314 (GDIE…RFGG) and 332-366 (LLTS…KEPL). 2 positions are modified to phosphoserine: Ser296 and Ser299. Residues 337–346 (HQPPPPPPAS) are compositionally biased toward pro residues. 2 positions are modified to phosphoserine: Ser348 and Ser358. Residues 398–490 (PEDFSNFPPE…VEGRLPARSE (93 aa)) adopt a coiled-coil conformation. The tract at residues 399-551 (EDFSNFPPEQ…FDDEEPLPAI (153 aa)) is interaction with RND2. The region spanning 403-480 (NFPPEQRRKK…AQKFEAWLAE (78 aa)) is the REM-1 domain. A disordered region spans residues 487 to 531 (ARSEQARRQSGLYDGQTHQTVTNCAQDRESPDGSYTEEQSQESEH). Positions 494-616 (RQSGLYDGQT…VYLDKNAKGS (123 aa)) are interaction with PDE6G. A Phosphoserine modification is found at Ser496. Tyr499 is subject to Phosphotyrosine. The span at 502 to 511 (QTHQTVTNCA) shows a compositional bias: polar residues. The segment at 513–616 (DRESPDGSYT…VYLDKNAKGS (104 aa)) is required for interaction with TNKS. Ser520 carries the post-translational modification Phosphoserine. The segment at 534–616 (LAPDFDDEFD…VYLDKNAKGS (83 aa)) is interaction with DNM1 and DNM3. The SH3 domain maps to 549–610 (PAIGTCKALY…PTSYVEVYLD (62 aa)). The segment at 549-616 (PAIGTCKALY…VYLDKNAKGS (68 aa)) is interaction with ARHGAP17, DAAM1, DIAPH1 and DIAPH2. An interaction with DNM2 and WASL region spans residues 552–608 (GTCKALYTFEGQNEGTISVVEGETLSVIEEDKGDGWTRIRRNEDEEGYVPTSYVEVY). The interval 552-609 (GTCKALYTFEGQNEGTISVVEGETLSVIEEDKGDGWTRIRRNEDEEGYVPTSYVEVYL) is interaction with FASLG.

The protein belongs to the FNBP1 family. Homodimerizes, the dimers can polymerize end-to-end to form filamentous structures. Interacts specifically with GTP-bound RND2 and CDC42. Interacts with AKAP9, ARHGAP17, DAAM1, DIAPH1, DIAPH2, DNM1, DNM2, DNM3, FASLG/FASL, microtubules, PDE6G, SNX2 and WASL/N-WASP. May interact with TNKS. As to expression, expressed in brain and testis.

The protein localises to the cytoplasm. The protein resides in the cytoskeleton. Its subcellular location is the cell cortex. It is found in the lysosome. It localises to the cytoplasmic vesicle. The protein localises to the cell membrane. The protein resides in the membrane. Its subcellular location is the clathrin-coated pit. Required to coordinate membrane tubulation with reorganization of the actin cytoskeleton during the late stage of clathrin-mediated endocytosis. Binds to lipids such as phosphatidylinositol 4,5-bisphosphate and phosphatidylserine and promotes membrane invagination and the formation of tubules. Also enhances actin polymerization via the recruitment of WASL/N-WASP, which in turn activates the Arp2/3 complex. Actin polymerization may promote the fission of membrane tubules to form endocytic vesicles. May act as a link between RND2 signaling and regulation of the actin cytoskeleton. May be required for the lysosomal retention of FASLG/FASL. The protein is Formin-binding protein 1 (Fnbp1) of Mus musculus (Mouse).